The sequence spans 1125 residues: Probable inorganic carbon transporter subunit DabA (1125 aa).

Cys578, Asp580, His769, and Cys784 together coordinate Zn(2+). The disordered stretch occupies residues 1106–1125; that stretch reads SDPRPPALVEPKQTETHHAA.

The protein belongs to the inorganic carbon transporter (TC 9.A.2) DabA family. Forms a complex with DabB. It depends on Zn(2+) as a cofactor.

It localises to the cell inner membrane. Its function is as follows. Part of an energy-coupled inorganic carbon pump. In Nitrosococcus oceani (strain ATCC 19707 / BCRC 17464 / JCM 30415 / NCIMB 11848 / C-107), this protein is Probable inorganic carbon transporter subunit DabA.